The sequence spans 151 residues: Transcriptional regulator MraZ (151 aa).

SpoVT-AbrB domains are found at residues 5-52 and 81-124; these read ATAV…PLDE and ATEC…SDVE.

This sequence belongs to the MraZ family. Forms oligomers.

Its subcellular location is the cytoplasm. It localises to the nucleoid. The polypeptide is Transcriptional regulator MraZ (Haemophilus influenzae (strain 86-028NP)).